The chain runs to 389 residues: bZIP transcription factor 68 (389 aa).

Over residues 1 to 16 the composition is skewed to basic and acidic residues; the sequence is MGSSEMEKSGKEKEPK. Disordered regions lie at residues 1–42, 124–154, 170–236, 285–318, and 356–389; these read MGSS…VSAG, MAEASGNTGSVIEGDGKPSDGKEKLPIKRSK, AGKN…NLPV, QPWLQVSDEREIKRQRRKQSNRESARRSRLRKQA, and SSLKNKFSSAPSLEGGDLDKNEQEPQRSTRQDVA. A compositionally biased stretch (low complexity) spans 19–32; sequence PPSTSSSAPATVVS. Basic and acidic residues predominate over residues 137-149; that stretch reads GDGKPSDGKEKLP. A Glycyl lysine isopeptide (Lys-Gly) (interchain with G-Cter in ubiquitin) cross-link involves residue lysine 154. A compositionally biased stretch (low complexity) spans 170–205; it reads AGKNSGASANGACSKSAESGSDGSSDGSDANSQNDS. Basic and acidic residues-rich tracts occupy residues 206–215 and 304–318; these read GSRHNGKDGE and SNRESARRSRLRKQA. Residues 295–358 enclose the bZIP domain; the sequence is EIKRQRRKQS…EELLAENSSL (64 aa). The tract at residues 297–316 is basic motif; that stretch reads KRQRRKQSNRESARRSRLRK. The segment at 323-358 is leucine-zipper; it reads LAQRAEVLNGENSSLRAEINKLKSQYEELLAENSSL. The span at 356-366 shows a compositional bias: polar residues; it reads SSLKNKFSSAP. Positions 372 to 389 are enriched in basic and acidic residues; the sequence is DLDKNEQEPQRSTRQDVA.

The protein belongs to the bZIP family. In terms of assembly, monomer, homodimer and heterodimers with GBF1/BZIP41, GBF2/BZIP54 and GBF3/BZIP55. Heterodimers with BZIP16. Interacts with GIP1.

It is found in the nucleus. Transcriptional activator that binds to the G-box motif (5'-CACGTG-3') and other cis-acting elements with 5'-ACGT-3' core, such as Hex, C-box and as-1 motifs. Possesses high binding affinity to G-box, much lower affinity to Hex and C-box, and little affinity to as-1 element. G-box and G-box-like motifs are cis-acting elements defined in promoters of certain plant genes which are regulated by such diverse stimuli as light-induction or hormone control. Binds to the G-box motif 5'-CACGTG-3' of LHCB2.4 (At3g27690) promoter. May act as transcriptional activator in light-regulated expression of LHCB2.4. Probably binds DNA as monomer. DNA-binding activity is redox-dependent. This is bZIP transcription factor 68 from Arabidopsis thaliana (Mouse-ear cress).